The chain runs to 874 residues: Oxysterol-binding protein-related protein 5 (874 aa).

The disordered stretch occupies residues 1–71 (MKEEAFLRRR…PQTPGSATKV (71 aa)). Ser-12 is subject to Phosphoserine. The stretch at 93–123 (VSKKDALKAQKENYRQEKKRATKQLFSALTD) forms a coiled coil. The PH domain occupies 126–243 (VVIMADSLKI…WLDALELALR (118 aa)). Disordered regions lie at residues 255–277 (QGRDGEQGSSPDASPSSLYGLPT) and 299–338 (FSDKSERENAEDSDAETQDHSRKTNESGSDLLDSPGGPWR). Polar residues predominate over residues 261 to 277 (QGSSPDASPSSLYGLPT). The segment covering 299–308 (FSDKSERENA) has biased composition (basic and acidic residues). A 1,2-diacyl-sn-glycero-3-phospho-(1D-myo-inositol 4-phosphate) is bound by residues 383–388 (LSRVVL), 445–448 (KPYN), and 477–478 (HH). A 1,2-diacyl-sn-glycero-3-phospho-L-serine-binding positions include 383 to 388 (LSRVVL) and Asn-448. A 1,2-diacyl-sn-glycero-3-phospho-L-serine is bound at residue Ser-503. Over residues 660–684 (GDQHKATQEKSVLEEAQRQRAREHQ) the composition is skewed to basic and acidic residues. 2 disordered regions span residues 660-685 (GDQHKATQEKSVLEEAQRQRAREHQQ) and 739-798 (GQTT…GGES). Residues Lys-669, Glu-673, and Arg-677 each contribute to the a 1,2-diacyl-sn-glycero-3-phospho-(1D-myo-inositol 4-phosphate) site. Residues Ser-746 and Ser-749 each carry the phosphoserine modification. Basic and acidic residues predominate over residues 754–764 (PSSDRRLRKAS). Positions 765–782 (DQPSGHSQVTESSGSTPE) are enriched in polar residues. The helical transmembrane segment at 855-873 (SWFLLCIFLTCQLFINYIL) threads the bilayer.

It belongs to the OSBP family.

Its subcellular location is the endoplasmic reticulum membrane. Functionally, lipid transporter involved in lipid countertransport between the endoplasmic reticulum and the plasma membrane: specifically exchanges phosphatidylserine with phosphatidylinositol 4-phosphate (PI4P), delivering phosphatidylserine to the plasma membrane in exchange for PI4P, which is degraded by the SAC1/SACM1L phosphatase in the endoplasmic reticulum. Binds phosphatidylserine and PI4P in a mutually exclusive manner. May cooperate with NPC1 to mediate the exit of cholesterol from endosomes/lysosomes. Binds 25-hydroxycholesterol and cholesterol. In Mus musculus (Mouse), this protein is Oxysterol-binding protein-related protein 5 (Osbpl5).